We begin with the raw amino-acid sequence, 926 residues long: Rap guanine nucleotide exchange factor 3 (926 aa).

Ser-79 is modified (phosphoserine). The DEP domain occupies 110–186 (ATYPTLIRDR…RDAQFYRFPG (77 aa)). The interaction with PDE3B stretch occupies residues 218-242 (TVALRKSPGQRTDEELDLIFEELVH). 3',5'-cyclic AMP is bound by residues 311–314 (GQLA) and 321–322 (RA). The disordered stretch occupies residues 369–388 (TSQGAGPSRPPTPGRNRYTV). Residues 384-521 (NRYTVMSGTP…EQYPERRRHH (138 aa)) enclose the N-terminal Ras-GEF domain. Residues 398–422 (ELLLEAMRPDSSAHDPTETFLSDFL) form an interaction with PDE3B region. 2 positions are modified to phosphoserine: Ser-531 and Ser-867. A Ras-GEF domain is found at 665–892 (SAKDLAGQLT…SRISTCSEQS (228 aa)).

In terms of assembly, interacts with PDE3B and PIK3R6; form a signaling complex that regulates phosphatidylinositol 3-kinase gamma in angiogenesis. As to expression, expressed at low levels in adult brain. Strongly expressed in parts of the neonatal brain, including the septum and the thalamus.

The protein resides in the cytoplasm. The protein localises to the membrane. Guanine nucleotide exchange factor (GEF) for RAP1A and RAP2A small GTPases that is activated by binding cAMP. Through simultaneous binding of PDE3B to RAPGEF3 and PIK3R6 is assembled in a signaling complex in which it activates the PI3K gamma complex and which is involved in angiogenesis. Plays a role in the modulation of the cAMP-induced dynamic control of endothelial barrier function through a pathway that is independent on Rho-mediated signaling. Required for the actin rearrangement at cell-cell junctions, such as stress fibers and junctional actin. This is Rap guanine nucleotide exchange factor 3 (Rapgef3) from Rattus norvegicus (Rat).